A 367-amino-acid chain; its full sequence is Probable trehalose-phosphate phosphatase 4 (367 aa).

Belongs to the trehalose phosphatase family. A divalent metal cation serves as cofactor.

It carries out the reaction alpha,alpha-trehalose 6-phosphate + H2O = alpha,alpha-trehalose + phosphate. Its pathway is glycan biosynthesis; trehalose biosynthesis. Functionally, removes the phosphate from trehalose 6-phosphate to produce free trehalose. Trehalose accumulation in plant may improve abiotic stress tolerance. The polypeptide is Probable trehalose-phosphate phosphatase 4 (TPP4) (Oryza sativa subsp. japonica (Rice)).